The chain runs to 214 residues: Cytochrome c biogenesis ATP-binding export protein CcmA (214 aa).

The 203-residue stretch at 12–214 (LAAHALAFSR…TRMLTLEAAA (203 aa)) folds into the ABC transporter domain. An ATP-binding site is contributed by 44–51 (GDNGAGKT).

This sequence belongs to the ABC transporter superfamily. CcmA exporter (TC 3.A.1.107) family. As to quaternary structure, the complex is composed of two ATP-binding proteins (CcmA) and two transmembrane proteins (CcmB).

It localises to the cell inner membrane. It carries out the reaction heme b(in) + ATP + H2O = heme b(out) + ADP + phosphate + H(+). Functionally, part of the ABC transporter complex CcmAB involved in the biogenesis of c-type cytochromes; once thought to export heme, this seems not to be the case, but its exact role is uncertain. Responsible for energy coupling to the transport system. This is Cytochrome c biogenesis ATP-binding export protein CcmA from Xanthomonas oryzae pv. oryzae (strain MAFF 311018).